Reading from the N-terminus, the 318-residue chain is Beta-ketoacyl-[acyl-carrier-protein] synthase III (318 aa).

Residues C112 and H245 contribute to the active site. Residues 246-250 (QANIR) are ACP-binding. Residue N275 is part of the active site.

This sequence belongs to the thiolase-like superfamily. FabH family. In terms of assembly, homodimer.

It localises to the cytoplasm. It carries out the reaction malonyl-[ACP] + acetyl-CoA + H(+) = 3-oxobutanoyl-[ACP] + CO2 + CoA. Its pathway is lipid metabolism; fatty acid biosynthesis. Catalyzes the condensation reaction of fatty acid synthesis by the addition to an acyl acceptor of two carbons from malonyl-ACP. Catalyzes the first condensation reaction which initiates fatty acid synthesis and may therefore play a role in governing the total rate of fatty acid production. Possesses both acetoacetyl-ACP synthase and acetyl transacylase activities. Its substrate specificity determines the biosynthesis of branched-chain and/or straight-chain of fatty acids. In Nitrosomonas europaea (strain ATCC 19718 / CIP 103999 / KCTC 2705 / NBRC 14298), this protein is Beta-ketoacyl-[acyl-carrier-protein] synthase III.